The sequence spans 316 residues: MTLATIPSPPQGVWYLGPIPIRAYAMCIIAGIIVAIWLTRKRYAARGGNPEIVLDAAIVAVPAGIIGGRIYHVITDNQKYFCDTCNPVDAFKITNGGLGIWGAVILGGLAVAVFFRYKKLPLAPFADAVAPAVILAQGIGRLGNWFNQELYGAETTVPWALEIYYRVDENGKFAPVTGTSTGEVMATVHPTFLYELLWNLLIFALLMWADKRFKLGHGRVFALYVAGYTLGRFWIEQMRVDEATLIGGIRINTIVSAVVFAGAIIVFFLLKKGRETPEEVDPTFAASVAADAVASPDGKPLPKAGEGIDGETPSTR.

Transmembrane regions (helical) follow at residues 18-38, 47-67, and 95-115; these read PIPI…AIWL, GGNP…GIIG, and NGGL…AVFF. Arginine 141 provides a ligand contact to a 1,2-diacyl-sn-glycero-3-phospho-(1'-sn-glycerol). 2 consecutive transmembrane segments (helical) span residues 188 to 208 and 251 to 271; these read VHPT…LLMW and INTI…FLLK. The disordered stretch occupies residues 292–316; it reads AVASPDGKPLPKAGEGIDGETPSTR.

The protein belongs to the Lgt family.

It is found in the cell membrane. It carries out the reaction L-cysteinyl-[prolipoprotein] + a 1,2-diacyl-sn-glycero-3-phospho-(1'-sn-glycerol) = an S-1,2-diacyl-sn-glyceryl-L-cysteinyl-[prolipoprotein] + sn-glycerol 1-phosphate + H(+). It functions in the pathway protein modification; lipoprotein biosynthesis (diacylglyceryl transfer). Catalyzes the transfer of the diacylglyceryl group from phosphatidylglycerol to the sulfhydryl group of the N-terminal cysteine of a prolipoprotein, the first step in the formation of mature lipoproteins. In Corynebacterium glutamicum (strain ATCC 13032 / DSM 20300 / JCM 1318 / BCRC 11384 / CCUG 27702 / LMG 3730 / NBRC 12168 / NCIMB 10025 / NRRL B-2784 / 534), this protein is Phosphatidylglycerol--prolipoprotein diacylglyceryl transferase.